Here is a 343-residue protein sequence, read N- to C-terminus: Protein rax1 (343 aa).

At 1–235 (MASAPRVSEV…NLNPLTCTGR (235 aa)) the chain is on the cytoplasmic side. The RGS domain maps to 109–228 (ELSNEQTINS…LNHKFKHNLN (120 aa)). A helical transmembrane segment spans residues 236–256 (FIIGYVSTFAAYWLGFCGIFL). At 257-263 (DYSRRKR) the chain is on the extracellular side. The helical transmembrane segment at 264–284 (VWTLLPFAFGFYNLICTWSKH) threads the bilayer. Residues 285–317 (DPVLALLGYSEVKPFHYEKVLQPSIRLSLNRRA) lie on the Cytoplasmic side of the membrane. The chain crosses the membrane as a helical span at residues 318–338 (IFVLSIIVLIVGANTAIFSCV). The Extracellular portion of the chain corresponds to 339–343 (PSIRL).

Its subcellular location is the cell membrane. It localises to the endoplasmic reticulum membrane. May be involved in cell polarization and division. The sequence is that of Protein rax1 (rax1) from Schizosaccharomyces pombe (strain 972 / ATCC 24843) (Fission yeast).